Consider the following 185-residue polypeptide: Threonylcarbamoyl-AMP synthase (185 aa).

Positions 4 to 185 constitute a YrdC-like domain; it reads SWRVQQAAQD…IATAQIVRAG (182 aa).

It belongs to the SUA5 family. TsaC subfamily.

Its subcellular location is the cytoplasm. The catalysed reaction is L-threonine + hydrogencarbonate + ATP = L-threonylcarbamoyladenylate + diphosphate + H2O. In terms of biological role, required for the formation of a threonylcarbamoyl group on adenosine at position 37 (t(6)A37) in tRNAs that read codons beginning with adenine. Catalyzes the conversion of L-threonine, HCO(3)(-)/CO(2) and ATP to give threonylcarbamoyl-AMP (TC-AMP) as the acyladenylate intermediate, with the release of diphosphate. This Pseudomonas syringae pv. syringae (strain B728a) protein is Threonylcarbamoyl-AMP synthase.